Consider the following 1835-residue polypeptide: MAQPEGVLAWNPAFRPEDNDSVATDLARLALDSKKEVSETTDLDTHASPSAEEVTEENGPIEFKAAISADTGDQGAPDFVDSNMPAADDSSKPDIEEPEEPSCDESISMQTDEPRAVEDVTENVPTENGNVDITSGLRLEEHVAEEPHYGVPENSTGLASQNDAQDLFEGADTAWMDEAEGEENGATVNGEASDTRPGFWDNLGDNERDNEDDFFNQLKTQTKPIYSPPETESRFEEGIPLLGHGAATQNDHAQKGESQLDDVFGGDEDDESGFFSEIQKPTSAEGPSHITRKSTSQVIDSLNAVSDSPFSEPSPTAVEFNNGLTVPTADGEIKKAPSEEDLAARWQAELSDDADETMPTEDDLAARWQAELDDDDDDLLLDYDTTNAQGPPEAANIDHMNDSSILQSPFGTPENPARPKMQPVSYTPHQPSTSGLLSGIPAQNTAAQPTNASMSSYFSAQAPPNPVTTRAESFAERSKEGYKSPYDLPEDLARPRRAVASSRTVVAQPGTVPQPPPRSSSIPAPPLKASTVPPAPLGTSSAAPTAPQKNFFEELPLPPPRPKSRPASSGRYTPNATVCAPSVPQSIPPPANPYSNVPGAPQSNIGPPNPPQLQQPERLDPYSNLLAPNVPSAPAVPSTASRYSPRPPGLQAGVKPPPSPRYSPAPPQSTNAAAAAPPRNRYASQPASISGQGAALQFQPRTSSPLAYHEKIHYQDQGQSEERPQLQPTAIPPPLNHSHPSEQPVSSENKGPSSADVLENMPPVSTRPQSPPKNPYAPSAYTSEFAKRAAPVSTGPPIAGMTGVLNPSTEESPFVPPRRSQTQSPSQTLSPRLSVPSLDPFQRPASVHGSTSPTRTVNPYAPAPVPTHNRAPSQVLEFIPPTDGQQLDSLERWKGAPIFKFGFGGAVISCFPKHIPRYSAGQAAPMIKSCPGEVRVSQLNDWLPAAEGIVQHPGPLKGKSKKKDLVAWLSSKIAAFENADIPDFDRLSPDATKRREEKTLLWKVIRVLVENDGVLEGSVEAQKSLRNLLFPNLQDSVPNQSLGDGFTPSTTLQPLNAPSQPDAVDPRSVDSLRDTLVLGEREKAVWAAVDKRLWGHAMIIASTMDRSVWQQVVQEFVRREVRSATSRTESLAAFYEILAGNVEESIDELVPPSARAGLQMISKVDGHGTAKNSLDGLDSWRETLGLVLSNRSPDDQRALVALGRLLLSYNRTEAAHICFILSRAAVFGGVDDPLANIVLLGVDHQRLASSAALYDDDSILLTEAYEFATSVLAGSSVSTLPHLLAFKLIHAWSLADRGRKSEAQQYCDAIAAALKATTKPSGYHNQHLFFGVDELSARLRETTSDGGSSWISRPSMEKVSGSMWAKFNSFVAGDDSDAASTGSGKAEEIGPFARVSGTPTISRSPSVSDIYGSYPVAAAQPLPGTGPSRYQPVSHYAPSASPEQLRGRSSMDSQRSSSFGYPLGQRRGSQEPSTPVDTNMFHGMPMYGSPPVAGYQSTPPQSSYMPLAPVAEDSASGAQQGPFSAYSQVSDSAPSHRPSAYAPEPFGHPFDTQGVSTTSQPDQGGYMPPASTGAYEPPSVESNTEPADGVRDESTEEDKPKKKSFMDEDDDEDLAARAAAIQKAERARRDREADEAFRKAAEADAKKPPPATEKKGWFSGWFGGKKDDNSGGGPIRAKLGEENSFYYDTELKKWVNKKDPGSAAPTRGTPPPPKGSAPPSRSMSGSGGPPPAMATPPPTGASGSRPSSSAGAPPSVSASPAPPSLGAPPPAIPRSVSTGAVLPTPPSSSAGAPPRPATSLSNASSIDDLLGAPQARKGPAARGKKKGRYVDVMAK.

Disordered stretches follow at residues 33-295, 378-866, 1040-1068, 1376-1404, 1422-1485, 1512-1682, and 1695-1835; these read SKKE…RKST, DLLL…APVP, QSLG…DPRS, SDAA…ISRS, LPGT…HGMP, EDSA…LGEE, and VNKK…VMAK. A compositionally biased stretch (polar residues) spans 123 to 133; the sequence is NVPTENGNVDI. The segment covering 138 to 148 has biased composition (basic and acidic residues); the sequence is RLEEHVAEEPH. Composition is skewed to polar residues over residues 153–164 and 424–459; these read ENSTGLASQNDA and VSYT…SYFS. Positions 473–482 are enriched in basic and acidic residues; sequence SFAERSKEGY. Residues 512 to 526 show a composition bias toward pro residues; sequence VPQPPPRSSSIPAPP. Over residues 624-638 the composition is skewed to low complexity; the sequence is NLLAPNVPSAPAVPS. Positions 655 to 667 are enriched in pro residues; the sequence is KPPPSPRYSPAPP. Low complexity predominate over residues 668 to 678; sequence QSTNAAAAAPP. The span at 682 to 691 shows a compositional bias: polar residues; it reads YASQPASISG. Residues 708-724 show a composition bias toward basic and acidic residues; the sequence is YHEKIHYQDQGQSEERP. The span at 741 to 752 shows a compositional bias: polar residues; that stretch reads SEQPVSSENKGP. Over residues 817-832 the composition is skewed to low complexity; sequence PRRSQTQSPSQTLSPR. 2 stretches are compositionally biased toward polar residues: residues 848–857 and 1040–1059; these read HGSTSPTRTV and QSLG…NAPS. A compositionally biased stretch (low complexity) spans 1447–1458; that stretch reads GRSSMDSQRSSS. 2 stretches are compositionally biased toward polar residues: residues 1516 to 1533 and 1553 to 1562; these read SGAQ…SDSA and QGVSTTSQPD. 2 stretches are compositionally biased toward basic and acidic residues: residues 1588–1606 and 1623–1656; these read DGVR…KSFM and KAER…EKKG. Residues 1728 to 1739 show a composition bias toward pro residues; it reads GPPPAMATPPPT. Residues 1740-1759 show a composition bias toward low complexity; sequence GASGSRPSSSAGAPPSVSAS. Over residues 1760 to 1772 the composition is skewed to pro residues; that stretch reads PAPPSLGAPPPAI.

This sequence belongs to the SEC16 family.

The protein resides in the endoplasmic reticulum membrane. In terms of biological role, involved in the initiation of assembly of the COPII coat required for the formation of transport vesicles from the endoplasmic reticulum (ER) and the selection of cargo molecules. Also involved in autophagy. The chain is COPII coat assembly protein sec16 (sec16) from Neosartorya fischeri (strain ATCC 1020 / DSM 3700 / CBS 544.65 / FGSC A1164 / JCM 1740 / NRRL 181 / WB 181) (Aspergillus fischerianus).